Reading from the N-terminus, the 361-residue chain is Cobalt-precorrin-5B C(1)-methyltransferase (361 aa).

Belongs to the CbiD family.

It carries out the reaction Co-precorrin-5B + S-adenosyl-L-methionine = Co-precorrin-6A + S-adenosyl-L-homocysteine. Its pathway is cofactor biosynthesis; adenosylcobalamin biosynthesis; cob(II)yrinate a,c-diamide from sirohydrochlorin (anaerobic route): step 6/10. Catalyzes the methylation of C-1 in cobalt-precorrin-5B to form cobalt-precorrin-6A. This chain is Cobalt-precorrin-5B C(1)-methyltransferase, found in Methylorubrum extorquens (strain CM4 / NCIMB 13688) (Methylobacterium extorquens).